The chain runs to 394 residues: MNKKTVRDVDVKGKRVFCRVDFNVPMENGAITDDTRIRAALPTIRYLMEQGAKVILASHLGRPKGKVVEELRLNAVARRLSELLGKHVTKTDEAYGDAVKEAISKMNEGDVLLLENVRFYPGEEKNDPELAKAFAELADIYVNDAFGAAHRAHASTEGIAHYLPAVAGFLMEKEIEVLGKALSNPDRPFTAIIGGAKVKDKIGVIENLLNKVDNLIIGGGLAYTFVKALGHEIGKSLLEEDKIELAKSFMEKAKEKGVNFYMPVDVVVADRFANDANTKVVSIDAIPSDWEALDIGPKTRELYRDVIMKSKLVVWNGPMGVFEMDAFAEGTKAVAQALADAVDTYSVIGGGDSAAAVEKFGLAEKMDHISTGGGASLEFMEGKQLPGVVALNDK.

Substrate-binding positions include 21–23 (DFN), Arg36, 59–62 (HLGR), Arg118, and Arg151. Ser183 bears the Phosphoserine mark. Lys201 contributes to the ATP binding site. Thr299 is subject to Phosphothreonine. ATP is bound by residues Glu323 and 350–353 (GGDS).

The protein belongs to the phosphoglycerate kinase family. In terms of assembly, monomer.

The protein localises to the cytoplasm. The enzyme catalyses (2R)-3-phosphoglycerate + ATP = (2R)-3-phospho-glyceroyl phosphate + ADP. Its pathway is carbohydrate degradation; glycolysis; pyruvate from D-glyceraldehyde 3-phosphate: step 2/5. The protein is Phosphoglycerate kinase of Geobacillus sp. (strain WCH70).